A 1407-amino-acid chain; its full sequence is DNA-directed RNA polymerase subunit beta' (1407 aa).

Cys70, Cys72, Cys85, and Cys88 together coordinate Zn(2+). Mg(2+) is bound by residues Asp460, Asp462, and Asp464. Positions 814, 888, 895, and 898 each coordinate Zn(2+). Lys972 carries the post-translational modification N6-acetyllysine.

This sequence belongs to the RNA polymerase beta' chain family. As to quaternary structure, the RNAP catalytic core consists of 2 alpha, 1 beta, 1 beta' and 1 omega subunit. When a sigma factor is associated with the core the holoenzyme is formed, which can initiate transcription. The cofactor is Mg(2+). Zn(2+) serves as cofactor.

It carries out the reaction RNA(n) + a ribonucleoside 5'-triphosphate = RNA(n+1) + diphosphate. Functionally, DNA-dependent RNA polymerase catalyzes the transcription of DNA into RNA using the four ribonucleoside triphosphates as substrates. The chain is DNA-directed RNA polymerase subunit beta' from Shigella sonnei (strain Ss046).